We begin with the raw amino-acid sequence, 232 residues long: Small ribosomal subunit protein uS3 (232 aa).

The KH type-2 domain occupies 39–107 (IRAILHKELK…DVVINIVEIR (69 aa)).

Belongs to the universal ribosomal protein uS3 family. As to quaternary structure, part of the 30S ribosomal subunit. Forms a tight complex with proteins S10 and S14.

In terms of biological role, binds the lower part of the 30S subunit head. Binds mRNA in the 70S ribosome, positioning it for translation. The protein is Small ribosomal subunit protein uS3 of Rhodopseudomonas palustris (strain BisA53).